Consider the following 212-residue polypeptide: Peptide methionine sulfoxide reductase MsrA (212 aa).

Cys52 is a catalytic residue.

This sequence belongs to the MsrA Met sulfoxide reductase family.

The catalysed reaction is L-methionyl-[protein] + [thioredoxin]-disulfide + H2O = L-methionyl-(S)-S-oxide-[protein] + [thioredoxin]-dithiol. It catalyses the reaction [thioredoxin]-disulfide + L-methionine + H2O = L-methionine (S)-S-oxide + [thioredoxin]-dithiol. Its function is as follows. Has an important function as a repair enzyme for proteins that have been inactivated by oxidation. Catalyzes the reversible oxidation-reduction of methionine sulfoxide in proteins to methionine. The polypeptide is Peptide methionine sulfoxide reductase MsrA (Yersinia pseudotuberculosis serotype O:1b (strain IP 31758)).